A 267-amino-acid polypeptide reads, in one-letter code: HTH-type transcriptional activator CsvR (267 aa).

2 DNA-binding regions (H-T-H motif) span residues Ala-183 to Asp-204 and Ile-230 to Phe-253.

As to quaternary structure, homodimer.

Transcriptional activator of fimbrial genes in enterotoxigenic E.coli. This is HTH-type transcriptional activator CsvR from Escherichia coli.